A 231-amino-acid chain; its full sequence is Large ribosomal subunit protein uL1 (231 aa).

Belongs to the universal ribosomal protein uL1 family. As to quaternary structure, part of the 50S ribosomal subunit.

In terms of biological role, binds directly to 23S rRNA. The L1 stalk is quite mobile in the ribosome, and is involved in E site tRNA release. Functionally, protein L1 is also a translational repressor protein, it controls the translation of the L11 operon by binding to its mRNA. This Saccharophagus degradans (strain 2-40 / ATCC 43961 / DSM 17024) protein is Large ribosomal subunit protein uL1.